A 111-amino-acid chain; its full sequence is uncharacterized protein (111 aa).

As to quaternary structure, homodimer, or homotetramer.

This is an uncharacterized protein from Bacillus subtilis (strain 168).